The following is a 237-amino-acid chain: Dynein axonemal assembly factor 19 (237 aa).

The stretch at 8-33 (NFKALEKELQAALAADEKYKRENAAK) forms a coiled coil.

This sequence belongs to the DNAAF19/PR46b family. In terms of assembly, homodimer.

It is found in the cytoplasm. It localises to the cell projection. The protein resides in the cilium. The protein localises to the flagellum. Dynein-attachment factor required for cilia motility. This Mus musculus (Mouse) protein is Dynein axonemal assembly factor 19 (Dnaaf19).